Here is a 217-residue protein sequence, read N- to C-terminus: Pyridoxine/pyridoxamine 5'-phosphate oxidase (217 aa).

Substrate is bound by residues 13 to 16 (RREY) and Lys-71. FMN is bound by residues 66–71 (RIVLLK), 81–82 (YT), Arg-87, Lys-88, and Gln-110. Residues Tyr-128, Arg-132, and Ser-136 each contribute to the substrate site. FMN is bound by residues 145-146 (QS) and Trp-190. A substrate-binding site is contributed by 196–198 (RLH). Arg-200 provides a ligand contact to FMN.

Belongs to the pyridoxamine 5'-phosphate oxidase family. In terms of assembly, homodimer. It depends on FMN as a cofactor.

The catalysed reaction is pyridoxamine 5'-phosphate + O2 + H2O = pyridoxal 5'-phosphate + H2O2 + NH4(+). The enzyme catalyses pyridoxine 5'-phosphate + O2 = pyridoxal 5'-phosphate + H2O2. It participates in cofactor metabolism; pyridoxal 5'-phosphate salvage; pyridoxal 5'-phosphate from pyridoxamine 5'-phosphate: step 1/1. The protein operates within cofactor metabolism; pyridoxal 5'-phosphate salvage; pyridoxal 5'-phosphate from pyridoxine 5'-phosphate: step 1/1. In terms of biological role, catalyzes the oxidation of either pyridoxine 5'-phosphate (PNP) or pyridoxamine 5'-phosphate (PMP) into pyridoxal 5'-phosphate (PLP). The polypeptide is Pyridoxine/pyridoxamine 5'-phosphate oxidase (Serratia proteamaculans (strain 568)).